The chain runs to 84 residues: UPF0457 protein BCE33L2961 (84 aa).

This sequence belongs to the UPF0457 family.

This chain is UPF0457 protein BCE33L2961, found in Bacillus cereus (strain ZK / E33L).